The sequence spans 331 residues: Uroporphyrinogen decarboxylase (331 aa).

Substrate contacts are provided by residues 22–26 (RQAGR), aspartate 71, tyrosine 145, serine 199, and histidine 308.

This sequence belongs to the uroporphyrinogen decarboxylase family. In terms of assembly, homodimer.

Its subcellular location is the cytoplasm. It carries out the reaction uroporphyrinogen III + 4 H(+) = coproporphyrinogen III + 4 CO2. The protein operates within porphyrin-containing compound metabolism; protoporphyrin-IX biosynthesis; coproporphyrinogen-III from 5-aminolevulinate: step 4/4. Functionally, catalyzes the decarboxylation of four acetate groups of uroporphyrinogen-III to yield coproporphyrinogen-III. In Picrophilus torridus (strain ATCC 700027 / DSM 9790 / JCM 10055 / NBRC 100828 / KAW 2/3), this protein is Uroporphyrinogen decarboxylase.